A 61-amino-acid chain; its full sequence is Insect toxin BsIT3 (61 aa).

Positions 1 to 61 constitute an LCN-type CS-alpha/beta domain; sequence DGYILNSKGC…RWTSSKNKCN (61 aa). 4 disulfides stabilise this stretch: C10–C60, C14–C35, C21–C42, and C25–C44.

The protein belongs to the long (4 C-C) scorpion toxin superfamily. Sodium channel inhibitor family. Beta subfamily. In terms of tissue distribution, expressed by the venom gland.

Its subcellular location is the secreted. Depressant insect beta-toxins cause a transient contraction paralysis followed by a slow flaccid paralysis. They bind voltage-independently at site-4 of sodium channels (Nav) and shift the voltage of activation toward more negative potentials thereby affecting sodium channel activation and promoting spontaneous and repetitive firing. This toxin is active only on insects. This chain is Insect toxin BsIT3, found in Hottentotta tamulus sindicus (Scorpion).